A 53-amino-acid polypeptide reads, in one-letter code: IgW transmembrane form Tm1T3/Tm6T3/Tm3C4 (53 aa).

The disordered stretch occupies residues 1 to 25; it reads VQAVPPDVKGEEGKEEVEDMDGDDN. Acidic residues predominate over residues 13–24; sequence GKEEVEDMDGDD. A helical membrane pass occupies residues 29-49; the sequence is VAAFAILFILSFLYSTFVTVV.

Expressed in the spleen, pancreas, peripheral blood lymphocytes and at low levels in the epigonal organ.

The protein localises to the membrane. In Ginglymostoma cirratum (Nurse shark), this protein is IgW transmembrane form Tm1T3/Tm6T3/Tm3C4.